We begin with the raw amino-acid sequence, 121 residues long: UPF0102 protein BT_2236 (121 aa).

Belongs to the UPF0102 family.

The sequence is that of UPF0102 protein BT_2236 from Bacteroides thetaiotaomicron (strain ATCC 29148 / DSM 2079 / JCM 5827 / CCUG 10774 / NCTC 10582 / VPI-5482 / E50).